Consider the following 113-residue polypeptide: Holo-[acyl-carrier-protein] synthase (113 aa).

Mg(2+) is bound by residues D8 and E57.

This sequence belongs to the P-Pant transferase superfamily. AcpS family. Requires Mg(2+) as cofactor.

It is found in the cytoplasm. It catalyses the reaction apo-[ACP] + CoA = holo-[ACP] + adenosine 3',5'-bisphosphate + H(+). Transfers the 4'-phosphopantetheine moiety from coenzyme A to a Ser of acyl-carrier-protein. In Thermodesulfovibrio yellowstonii (strain ATCC 51303 / DSM 11347 / YP87), this protein is Holo-[acyl-carrier-protein] synthase.